The primary structure comprises 29 residues: Glucagon (29 aa).

This sequence belongs to the glucagon family.

Its subcellular location is the secreted. Its function is as follows. Glucagon plays a key role in glucose metabolism and homeostasis. Regulates blood glucose by increasing gluconeogenesis and decreasing glycolysis. The chain is Glucagon (gcg) from Callorhinchus milii (Ghost shark).